Consider the following 345-residue polypeptide: tRNA-dihydrouridine(20/20a) synthase (345 aa).

FMN-binding positions include 26-28 (PML) and Q78. C108 functions as the Proton donor in the catalytic mechanism. FMN-binding positions include K147, H180, 220–222 (NGG), and 242–243 (GR).

This sequence belongs to the Dus family. DusA subfamily. FMN is required as a cofactor.

The enzyme catalyses 5,6-dihydrouridine(20) in tRNA + NADP(+) = uridine(20) in tRNA + NADPH + H(+). It carries out the reaction 5,6-dihydrouridine(20) in tRNA + NAD(+) = uridine(20) in tRNA + NADH + H(+). It catalyses the reaction 5,6-dihydrouridine(20a) in tRNA + NADP(+) = uridine(20a) in tRNA + NADPH + H(+). The catalysed reaction is 5,6-dihydrouridine(20a) in tRNA + NAD(+) = uridine(20a) in tRNA + NADH + H(+). In terms of biological role, catalyzes the synthesis of 5,6-dihydrouridine (D), a modified base found in the D-loop of most tRNAs, via the reduction of the C5-C6 double bond in target uridines. Specifically modifies U20 and U20a in tRNAs. In Yersinia pestis, this protein is tRNA-dihydrouridine(20/20a) synthase.